Here is a 444-residue protein sequence, read N- to C-terminus: Argininosuccinate synthase (444 aa).

ATP contacts are provided by residues 18-26 and alanine 44; that span reads AFSGGLDTS. Tyrosine 100 serves as a coordination point for L-citrulline. 2 residues coordinate ATP: glycine 130 and threonine 132. Positions 132, 136, and 137 each coordinate L-aspartate. Asparagine 136 is an L-citrulline binding site. Aspartate 137 is a binding site for ATP. L-citrulline contacts are provided by arginine 140 and serine 193. Aspartate 195 contributes to the ATP binding site. 3 residues coordinate L-citrulline: threonine 202, glutamate 204, and glutamate 281.

Belongs to the argininosuccinate synthase family. Type 2 subfamily. As to quaternary structure, homotetramer.

The protein resides in the cytoplasm. The enzyme catalyses L-citrulline + L-aspartate + ATP = 2-(N(omega)-L-arginino)succinate + AMP + diphosphate + H(+). It participates in amino-acid biosynthesis; L-arginine biosynthesis; L-arginine from L-ornithine and carbamoyl phosphate: step 2/3. In Actinobacillus succinogenes (strain ATCC 55618 / DSM 22257 / CCUG 43843 / 130Z), this protein is Argininosuccinate synthase.